A 567-amino-acid chain; its full sequence is Urease subunit alpha (567 aa).

Residues 129–567 (GGIDSHIHFI…LPLAQRYFLF (439 aa)) enclose the Urease domain. Positions 134, 136, and 217 each coordinate Ni(2+). N6-carboxylysine is present on K217. Residue H219 participates in substrate binding. Residues H246 and H272 each coordinate Ni(2+). The active-site Proton donor is the H320. D360 is a Ni(2+) binding site.

It belongs to the metallo-dependent hydrolases superfamily. Urease alpha subunit family. Heterotrimer of UreA (gamma), UreB (beta) and UreC (alpha) subunits. Three heterotrimers associate to form the active enzyme. The cofactor is Ni cation. Carboxylation allows a single lysine to coordinate two nickel ions.

It is found in the cytoplasm. It carries out the reaction urea + 2 H2O + H(+) = hydrogencarbonate + 2 NH4(+). Its pathway is nitrogen metabolism; urea degradation; CO(2) and NH(3) from urea (urease route): step 1/1. The protein is Urease subunit alpha of Pseudomonas entomophila (strain L48).